The chain runs to 743 residues: Polyribonucleotide nucleotidyltransferase (743 aa).

Residues D494 and D500 each contribute to the Mg(2+) site. The KH domain occupies 561-620 (PQHAEVFVNPDIIRLIIGPGGKNIKAITAATGASVDIEDSGRVSIFAPTAEALEKAREMV). In terms of domain architecture, S1 motif spans 630–704 (GKNYNAKVRK…SRKAVLLEEQ (75 aa)). Residues 702 to 743 (EEQGHPWNPEDTARPQRSDRGDRGDRRGDRGGRDRRDRGDRR) are disordered. The segment covering 712–743 (DTARPQRSDRGDRGDRRGDRGGRDRRDRGDRR) has biased composition (basic and acidic residues).

It belongs to the polyribonucleotide nucleotidyltransferase family. Mg(2+) is required as a cofactor.

It is found in the cytoplasm. It carries out the reaction RNA(n+1) + phosphate = RNA(n) + a ribonucleoside 5'-diphosphate. In terms of biological role, involved in mRNA degradation. Catalyzes the phosphorolysis of single-stranded polyribonucleotides processively in the 3'- to 5'-direction. This chain is Polyribonucleotide nucleotidyltransferase, found in Desulfovibrio desulfuricans (strain ATCC 27774 / DSM 6949 / MB).